The primary structure comprises 506 residues: GMP synthase [glutamine-hydrolyzing] (506 aa).

The Glutamine amidotransferase type-1 domain occupies 3–188 (GFVILDFGSQ…AQGMCKAPAD (186 aa)). The active-site Nucleophile is C80. Catalysis depends on residues H162 and E164. The region spanning 189 to 381 (WDAPHIKDIL…LGLPKEMLWR (193 aa)) is the GMPS ATP-PPase domain. 217–223 (SGGVDST) lines the ATP pocket.

In terms of assembly, homodimer.

The enzyme catalyses XMP + L-glutamine + ATP + H2O = GMP + L-glutamate + AMP + diphosphate + 2 H(+). It functions in the pathway purine metabolism; GMP biosynthesis; GMP from XMP (L-Gln route): step 1/1. Functionally, catalyzes the synthesis of GMP from XMP. The protein is GMP synthase [glutamine-hydrolyzing] of Bdellovibrio bacteriovorus (strain ATCC 15356 / DSM 50701 / NCIMB 9529 / HD100).